Consider the following 514-residue polypeptide: Bifunctional purine biosynthesis protein PurH (514 aa).

The 146-residue stretch at 1–146 folds into the MGS-like domain; sequence MPPLALLSTS…KNFAHVTVLC (146 aa).

This sequence belongs to the PurH family.

It catalyses the reaction (6R)-10-formyltetrahydrofolate + 5-amino-1-(5-phospho-beta-D-ribosyl)imidazole-4-carboxamide = 5-formamido-1-(5-phospho-D-ribosyl)imidazole-4-carboxamide + (6S)-5,6,7,8-tetrahydrofolate. The catalysed reaction is IMP + H2O = 5-formamido-1-(5-phospho-D-ribosyl)imidazole-4-carboxamide. It functions in the pathway purine metabolism; IMP biosynthesis via de novo pathway; 5-formamido-1-(5-phospho-D-ribosyl)imidazole-4-carboxamide from 5-amino-1-(5-phospho-D-ribosyl)imidazole-4-carboxamide (10-formyl THF route): step 1/1. The protein operates within purine metabolism; IMP biosynthesis via de novo pathway; IMP from 5-formamido-1-(5-phospho-D-ribosyl)imidazole-4-carboxamide: step 1/1. The polypeptide is Bifunctional purine biosynthesis protein PurH (Cyanothece sp. (strain PCC 7425 / ATCC 29141)).